The following is a 28-amino-acid chain: Expansin-B1 (28 aa).

The region spanning 11-28 (MLLSLQGPXSLRMVSESG) is the Expansin-like CBD domain.

It belongs to the expansin family. Expansin B subfamily.

The protein localises to the secreted. The protein resides in the cell wall. It localises to the membrane. In terms of biological role, may cause loosening and extension of plant cell walls by disrupting non-covalent bonding between cellulose microfibrils and matrix glucans. The polypeptide is Expansin-B1 (Pseudotsuga menziesii (Douglas-fir)).